The sequence spans 407 residues: Probable tRNA sulfurtransferase (407 aa).

Residues 61-165 form the THUMP domain; sequence NEIIQRLSKV…MDAIYIYEKV (105 aa). ATP contacts are provided by residues 183-184, 208-209, arginine 265, glycine 287, and glutamine 296; these read ML and HF.

This sequence belongs to the ThiI family.

It is found in the cytoplasm. The catalysed reaction is [ThiI sulfur-carrier protein]-S-sulfanyl-L-cysteine + a uridine in tRNA + 2 reduced [2Fe-2S]-[ferredoxin] + ATP + H(+) = [ThiI sulfur-carrier protein]-L-cysteine + a 4-thiouridine in tRNA + 2 oxidized [2Fe-2S]-[ferredoxin] + AMP + diphosphate. It carries out the reaction [ThiS sulfur-carrier protein]-C-terminal Gly-Gly-AMP + S-sulfanyl-L-cysteinyl-[cysteine desulfurase] + AH2 = [ThiS sulfur-carrier protein]-C-terminal-Gly-aminoethanethioate + L-cysteinyl-[cysteine desulfurase] + A + AMP + 2 H(+). It functions in the pathway cofactor biosynthesis; thiamine diphosphate biosynthesis. Its function is as follows. Catalyzes the ATP-dependent transfer of a sulfur to tRNA to produce 4-thiouridine in position 8 of tRNAs, which functions as a near-UV photosensor. Also catalyzes the transfer of sulfur to the sulfur carrier protein ThiS, forming ThiS-thiocarboxylate. This is a step in the synthesis of thiazole, in the thiamine biosynthesis pathway. The sulfur is donated as persulfide by IscS. This chain is Probable tRNA sulfurtransferase, found in Staphylococcus epidermidis (strain ATCC 35984 / DSM 28319 / BCRC 17069 / CCUG 31568 / BM 3577 / RP62A).